Here is a 170-residue protein sequence, read N- to C-terminus: Large ribosomal subunit protein bL17 (170 aa).

It belongs to the bacterial ribosomal protein bL17 family. Part of the 50S ribosomal subunit. Contacts protein L32.

The chain is Large ribosomal subunit protein bL17 from Azobacteroides pseudotrichonymphae genomovar. CFP2.